A 250-amino-acid polypeptide reads, in one-letter code: UDP-2,3-diacylglucosamine hydrolase (250 aa).

Mn(2+) is bound by residues D8, H10, D41, N79, and H114. 79–80 (NR) contacts substrate. 4 residues coordinate substrate: D122, S160, Q167, and H195. The Mn(2+) site is built by H195 and H197.

Belongs to the LpxH family. Mn(2+) is required as a cofactor.

The protein resides in the cell inner membrane. The enzyme catalyses UDP-2-N,3-O-bis[(3R)-3-hydroxytetradecanoyl]-alpha-D-glucosamine + H2O = 2-N,3-O-bis[(3R)-3-hydroxytetradecanoyl]-alpha-D-glucosaminyl 1-phosphate + UMP + 2 H(+). The protein operates within glycolipid biosynthesis; lipid IV(A) biosynthesis; lipid IV(A) from (3R)-3-hydroxytetradecanoyl-[acyl-carrier-protein] and UDP-N-acetyl-alpha-D-glucosamine: step 4/6. Its function is as follows. Hydrolyzes the pyrophosphate bond of UDP-2,3-diacylglucosamine to yield 2,3-diacylglucosamine 1-phosphate (lipid X) and UMP by catalyzing the attack of water at the alpha-P atom. Involved in the biosynthesis of lipid A, a phosphorylated glycolipid that anchors the lipopolysaccharide to the outer membrane of the cell. In Nitrosococcus oceani (strain ATCC 19707 / BCRC 17464 / JCM 30415 / NCIMB 11848 / C-107), this protein is UDP-2,3-diacylglucosamine hydrolase.